The sequence spans 393 residues: Formate-dependent phosphoribosylglycinamide formyltransferase (393 aa).

Residues 22-23 (EL) and E82 each bind N(1)-(5-phospho-beta-D-ribosyl)glycinamide. Residues R114, K155, 160-165 (SSGKGQ), 195-198 (EGFI), and E203 contribute to the ATP site. The 190-residue stretch at 119 to 308 (RLAAEELGLP…EFALHARAIL (190 aa)) folds into the ATP-grasp domain. 2 residues coordinate Mg(2+): E267 and E279. N(1)-(5-phospho-beta-D-ribosyl)glycinamide contacts are provided by residues D286, K356, and 363–364 (RR).

Belongs to the PurK/PurT family. In terms of assembly, homodimer.

The enzyme catalyses N(1)-(5-phospho-beta-D-ribosyl)glycinamide + formate + ATP = N(2)-formyl-N(1)-(5-phospho-beta-D-ribosyl)glycinamide + ADP + phosphate + H(+). It functions in the pathway purine metabolism; IMP biosynthesis via de novo pathway; N(2)-formyl-N(1)-(5-phospho-D-ribosyl)glycinamide from N(1)-(5-phospho-D-ribosyl)glycinamide (formate route): step 1/1. Involved in the de novo purine biosynthesis. Catalyzes the transfer of formate to 5-phospho-ribosyl-glycinamide (GAR), producing 5-phospho-ribosyl-N-formylglycinamide (FGAR). Formate is provided by PurU via hydrolysis of 10-formyl-tetrahydrofolate. The chain is Formate-dependent phosphoribosylglycinamide formyltransferase from Pseudomonas aeruginosa (strain LESB58).